The chain runs to 127 residues: Large ribosomal subunit protein bL19 (127 aa).

Belongs to the bacterial ribosomal protein bL19 family.

In terms of biological role, this protein is located at the 30S-50S ribosomal subunit interface and may play a role in the structure and function of the aminoacyl-tRNA binding site. The protein is Large ribosomal subunit protein bL19 of Acidovorax ebreus (strain TPSY) (Diaphorobacter sp. (strain TPSY)).